A 730-amino-acid chain; its full sequence is MTTAVTQAIIDGFFDASNGDPFATLGMHETEQGIEIRTLLPDANRMVVIERESGKEITELDCVDERGFFVGVIPNCRQFFAYQLQVFWGNEAQIIEDPYRFHPMIDDLEQWLLSEGSMLRPYEVLGAHFMECDGVSGVNFRLWAPNARRVSIVGDFNYWDGRRHPMRFHSKSGVWELFLPKASLGQLYKFELIDCHGNLRLKADPFAFSSQLRPDTASQVSALPNVVEMTEARKKANQGNQPISIYEVHLGSWRRNLENNFWLDYDQIADELIPYVKEMGFTHIEFLPLSEFPFDGSWGYQPLGLYSPTSRFGSPEAFRRLVKRAHEAGINVILDWVPGHFPSDTHGLVAFDGTALYEHEDPREGYHQDWNTLIYNYGRNEVKNFLSSNALYWLERFGVDGIRVDAVASMIYRDYSRAEGEWIPNQYGGRENLEAIEFLKHTNWKIHSEMAGAISIAEESTSFAGVTHPSENGGLGFNFKWNMGWMNDTLAYMKLDPIYRQYHHNKMTFGMVYQYSENFVLPLSHDEVVHGKYSLLGKMPGDTWQKFANLRAYYGYMWGYPGKKLLFMGNEFAQGREWNYEESLDWFLLDENIGGGWHKGVLKLVKDLNQIYQKNRPLFELDNSPEGFDWLVVDDAANSVLAFERRSSNGERIIVVSNFTPVPRHNYRIGVNVAGKYEEILNTDSMYYEGSNVGNFGCVASEQIESHGRENSISVSIPPLATVYLRLKTK.

The Nucleophile role is filled by Asp405. Residue Glu458 is the Proton donor of the active site.

This sequence belongs to the glycosyl hydrolase 13 family. GlgB subfamily. As to quaternary structure, monomer.

It carries out the reaction Transfers a segment of a (1-&gt;4)-alpha-D-glucan chain to a primary hydroxy group in a similar glucan chain.. It functions in the pathway glycan biosynthesis; glycogen biosynthesis. Catalyzes the formation of the alpha-1,6-glucosidic linkages in glycogen by scission of a 1,4-alpha-linked oligosaccharide from growing alpha-1,4-glucan chains and the subsequent attachment of the oligosaccharide to the alpha-1,6 position. This chain is 1,4-alpha-glucan branching enzyme GlgB (glgB), found in Haemophilus influenzae (strain ATCC 51907 / DSM 11121 / KW20 / Rd).